We begin with the raw amino-acid sequence, 325 residues long: Olfactory receptor 5H6 (325 aa).

Residues 1 to 41 (MFLYLCFIFQRTCSEEMEEENATLLTEFVLTGFLHQPDCKI) lie on the Extracellular side of the membrane. N-linked (GlcNAc...) asparagine glycosylation is present at Asn-21. A helical transmembrane segment spans residues 42–62 (PLFLAFLVIYLITIMGNLGLI). Residues 63–70 (VLIWKDPH) lie on the Cytoplasmic side of the membrane. A helical membrane pass occupies residues 71-91 (LHIPMYLFLGSLAFVDASLSS). Residues 92–115 (TVTPKMLINFLAKSKMISLSECMV) are Extracellular-facing. Cys-113 and Cys-205 form a disulfide bridge. The chain crosses the membrane as a helical span at residues 116 to 136 (QFFSLVTTVTTECFLLATMAY). The Cytoplasmic segment spans residues 137 to 155 (DRYVAICKALLYPVIMTNE). The helical transmembrane segment at 156–176 (LCIQLLVLSFIGGLLHALIHE) threads the bilayer. At 177–212 (AFSFRLTFCNSNIIQHFYCDIIPLLKISCTDSSINF) the chain is on the extracellular side. Residues 213 to 233 (LMVFIFAGSVQVFTIGTILIS) traverse the membrane as a helical segment. Residues 234-253 (YTIILFTILEKKSIKGIRKA) lie on the Cytoplasmic side of the membrane. Residues 254 to 274 (VSTCGAHLLSVSLYYGPLTFK) form a helical membrane-spanning segment. At 275-287 (YLGSASPQADDQD) the chain is on the extracellular side. The helical transmembrane segment at 288 to 308 (MMESLFYTVIVPLLNPMIYSL) threads the bilayer. Residues 309–325 (RNKQVIASFTKMFKSNV) lie on the Cytoplasmic side of the membrane.

It belongs to the G-protein coupled receptor 1 family.

Its subcellular location is the cell membrane. Its function is as follows. Odorant receptor. The chain is Olfactory receptor 5H6 (OR5H6) from Homo sapiens (Human).